The primary structure comprises 300 residues: Taste receptor type 2 member 105 (300 aa).

Residues 1-7 lie on the Extracellular side of the membrane; it reads MLSAAEG. A helical transmembrane segment spans residues 8–28; that stretch reads ILLSIATVEAGLGVLGNTFIA. The Cytoplasmic segment spans residues 29-43; it reads LVNCMDWAKNNKLSM. The helical transmembrane segment at 44–64 threads the bilayer; sequence TGFLLIGLATSRIFIVWLLTL. Residues 65–87 are Extracellular-facing; it reads DAYAKLFYPSKYFSSSLIEIISY. The chain crosses the membrane as a helical span at residues 88–108; sequence IWMTVNHLTVWFATSLSIFYF. Residues 109-128 lie on the Cytoplasmic side of the membrane; it reads LKIANFSDCVFLWLKRRTDK. Residues 129-149 form a helical membrane-spanning segment; the sequence is AFVFLLGCLLTSWVISFSFVV. Residues 150 to 181 lie on the Extracellular side of the membrane; that stretch reads KVMKDGKVNHRNRTSEMYWEKRQFTINYVFLN. Asn-161 carries an N-linked (GlcNAc...) asparagine glycan. Residues 182–202 form a helical membrane-spanning segment; that stretch reads IGVISLFMMTLTACFLLIMSL. Residues 203–233 lie on the Cytoplasmic side of the membrane; sequence WRHSRQMQSGVSGFRDLNTEAHVKAIKFLIS. Residues 234–254 traverse the membrane as a helical segment; the sequence is FIILFVLYFIGVSIEIICIFI. At 255–259 the chain is on the extracellular side; sequence PENKL. Residues 260–280 traverse the membrane as a helical segment; it reads LFIFGFTTASIYPCCHSFILI. The Cytoplasmic portion of the chain corresponds to 281–300; sequence LSNSQLKQAFVKVLQGLKFF.

This sequence belongs to the G-protein coupled receptor T2R family. In terms of tissue distribution, expressed in subsets of taste receptor cells of the tongue and palate epithelium and exclusively in gustducin-positive cells. Expressed in gastric and duodenal tissues.

It is found in the membrane. Functionally, gustducin-coupled cycloheximide receptor implicated in the perception of bitter compounds in the oral cavity and the gastrointestinal tract. Signals through PLCB2 and the calcium-regulated cation channel TRPM5. In Mus musculus (Mouse), this protein is Taste receptor type 2 member 105 (Tas2r105).